Consider the following 273-residue polypeptide: Sanguinarine reductase (273 aa).

Ser-153 (proton donor) is an active-site residue. Residues 157 to 161 and Lys-175 contribute to the substrate site; that span reads CDPDH.

Belongs to the NAD(P)-dependent epimerase/dehydratase family. In terms of assembly, monomer.

The enzyme catalyses dihydrosanguinarine + NADP(+) = sanguinarine + NADPH. The catalysed reaction is dihydrosanguinarine + NAD(+) = sanguinarine + NADH. It carries out the reaction dihydrochelirubine + NAD(+) = chelirubine + NADH. It catalyses the reaction dihydrochelirubine + NADP(+) = chelirubine + NADPH. Its activity is regulated as follows. Inhibited by iodoacetamide and irreversibly by its product, dihydrosanguinarine. Functionally, catalyzes the reduction of benzophenanthridines, preferentially sanguinarine, to the corresponding dihydroalkaloids. Involved in detoxifying the phytoalexins produced by plant itself. The sanguinarine produced by intact cells upon elicitation, after excretion and binding to cell wall elements, is rapidly reabsorbed and reduced to the less toxic dihydrosanguinarine. Can work with both NAD(P) or NAD as a hydrogen donor, but at low concentrations, the reaction velocity with NAD(P)H is threefold higher than with NADH. However, chelerythrine shows maximum conversion rates with NADH. The substrate preference is sanguinarine &gt; chelerythrine &gt; chelirubine, macarpine or 10-OH-chelerythrine. No activity with berberine or phenanthridine cations. In Eschscholzia californica (California poppy), this protein is Sanguinarine reductase.